The following is a 741-amino-acid chain: Pentatricopeptide repeat-containing protein At1g05670, mitochondrial (741 aa).

The N-terminal 21 residues, 1-21 (MKKPFTGLLMKRGTLSSFRNF), are a transit peptide targeting the mitochondrion. PPR repeat units follow at residues 174-208 (DPRV…GLVL), 209-244 (SVDS…GVCW), 245-279 (NVAS…GYTP), 280-314 (DVIS…GLKP), 315-349 (NSYI…GILP), 350-384 (DTVV…DITP), 385-419 (DVLT…GLEP), 420-454 (DSVT…GCSP), 455-489 (NVVT…GLQP), 490-524 (NIFT…GLNA), 525-559 (DTVT…GLQP), 560-594 (TIVT…GIAP), 595-629 (NATT…GVGP), 630-664 (DGKT…GFSV), and 665-699 (SVST…GLAA).

It belongs to the PPR family. P subfamily.

Its subcellular location is the mitochondrion. This is Pentatricopeptide repeat-containing protein At1g05670, mitochondrial from Arabidopsis thaliana (Mouse-ear cress).